Reading from the N-terminus, the 1187-residue chain is Disease resistance protein TAO1 (1187 aa).

The 165-residue stretch at 38–202 folds into the TIR domain; sequence WLHPVFLSFR…KISKDVSDVL (165 aa). Glu-113 is an active-site residue. The 262-residue stretch at 217 to 478 folds into the NB-ARC domain; that stretch reads EAHTTEITSL…FFRRERIETL (262 aa). 14 LRR repeats span residues 498-522, 611-633, 635-658, 660-679, 680-703, 704-727, 728-750, 752-775, 799-823, 824-849, 870-894, 895-918, 920-942, and 953-974; these read DKSLLSLNLGNIEMHNLLVQLGLDI, SRKLRLLHWERYPLTCLPPKFNP, FLVKINMRDSMLEKLWDGNEPIRN, KWMDLSFCVNLKELPDFSTA, TNLQELRLINCLSLVELPSSIGNA, TNLLELDLIDCSSLVKLPSSIGNL, TNLKKLFLNRCSSLVKLPSSFGN, TSLKELNLSGCSSLLEIPSSIGNI, NTNLKELHLLNCSSLMECPSSMLNL, TRLEDLNLSGCLSLVKLPSIGNVINL, ATNLDTLYLDGCSNLLELPSSIWNI, TNLQSLYLNGCSSLKELPSLVENA, NLQSLSLMKCSSLVELPSSIWRI, and CSSLLELNLVSHPVVPDSLILD.

It carries out the reaction NAD(+) + H2O = ADP-D-ribose + nicotinamide + H(+). In terms of biological role, TIR-NB-LRR receptor-like protein that contributes to disease resistance induced by the Pseudomonas syringae type III effector AvrB. Acts additively with RPM1 to generate a full disease resistance response to P.syringae expressing this type III effector. The sequence is that of Disease resistance protein TAO1 from Arabidopsis thaliana (Mouse-ear cress).